Reading from the N-terminus, the 66-residue chain is Ocellatin-PT1 (66 aa).

An N-terminal signal peptide occupies residues 1 to 22; that stretch reads MAFLKKSLFLVLFLGLVSLSIC. The propeptide occupies 23 to 39; the sequence is DEEKRQDEDDDDDDDEE. Val66 is modified (valine amide).

In terms of tissue distribution, expressed by the skin glands.

It localises to the secreted. Its function is as follows. Has antibacterial activity against Gram-negative bacterium E.coli ATCC 25922 (MIC=300 uM) but not against S.pneumoniae ATCC 700603, S.choleraesuis ATCC 14028 or Gram-positive bacterium S.aureus ATCC 29313. Shows virtually no hemolytic activity and no cytotoxicity. This Leptodactylus pustulatus (Ceara white-lipped frog) protein is Ocellatin-PT1.